A 166-amino-acid chain; its full sequence is Ubiquitin-conjugating enzyme E2-18 kDa (166 aa).

Positions 5 to 165 constitute a UBC core domain; that stretch reads MALRRLMKEY…VRRLARKTLG (161 aa). Cysteine 90 serves as the catalytic Glycyl thioester intermediate. Residue cysteine 90 forms a Glycyl cysteine thioester (Cys-Gly) (interchain with G-Cter in ubiquitin) linkage.

The protein belongs to the ubiquitin-conjugating enzyme family. Autoubiquitinated at Cys-90; undergoes 'Lys-48'-linked polyubiquitination, which leads to proteasome-dependent protein degradation.

The catalysed reaction is S-ubiquitinyl-[E1 ubiquitin-activating enzyme]-L-cysteine + [E2 ubiquitin-conjugating enzyme]-L-cysteine = [E1 ubiquitin-activating enzyme]-L-cysteine + S-ubiquitinyl-[E2 ubiquitin-conjugating enzyme]-L-cysteine.. Its pathway is protein modification; protein ubiquitination. Functionally, catalyzes the covalent attachment of ubiquitin to other proteins. Functions in degradation of misfolded or regulated proteins localized in the endoplasmic reticulum (ER) lumen or membrane via the ubiquitin-proteasome system. Cognate E2 conjugating enzyme for the doa10 ubiquitin ligase complex, which is part of the ERAD-C pathway responsible for the rapid degradation of membrane proteins with misfolded cytoplasmic domains, and of the hrd1 ubiquitin ligase complex, which is part of the ERAD-L and ERAD-M pathways responsible for the rapid degradation of soluble lumenal and membrane proteins with misfolded lumenal domains (ERAD-L), or ER-membrane proteins with misfolded transmembrane domains (ERAD-M). Together with hrd1, required for the degradation of the transcription factor sre1 precursor in the absence of its binding partner scp1. Has a role in the formation of chromatin structures that influence the localization of transcriptional silencing factors. The polypeptide is Ubiquitin-conjugating enzyme E2-18 kDa (ubc7) (Schizosaccharomyces pombe (strain 972 / ATCC 24843) (Fission yeast)).